The primary structure comprises 338 residues: RNA 3'-terminal phosphate cyclase (338 aa).

ATP-binding positions include Gln103 and 283 to 287; that span reads YLADQ. The Tele-AMP-histidine intermediate role is filled by His308.

Belongs to the RNA 3'-terminal cyclase family. Type 1 subfamily.

It is found in the cytoplasm. It carries out the reaction a 3'-end 3'-phospho-ribonucleotide-RNA + ATP = a 3'-end 2',3'-cyclophospho-ribonucleotide-RNA + AMP + diphosphate. Its function is as follows. Catalyzes the conversion of 3'-phosphate to a 2',3'-cyclic phosphodiester at the end of RNA. The mechanism of action of the enzyme occurs in 3 steps: (A) adenylation of the enzyme by ATP; (B) transfer of adenylate to an RNA-N3'P to produce RNA-N3'PP5'A; (C) and attack of the adjacent 2'-hydroxyl on the 3'-phosphorus in the diester linkage to produce the cyclic end product. The biological role of this enzyme is unknown but it is likely to function in some aspects of cellular RNA processing. The protein is RNA 3'-terminal phosphate cyclase of Escherichia coli O7:K1 (strain IAI39 / ExPEC).